The chain runs to 154 residues: Myoglobin (154 aa).

The Globin domain occupies 2–148 (GLSDGEWQLV…FRNDIAAKYK (147 aa)). A Phosphoserine modification is found at Ser4. A nitrite-binding site is contributed by His65. His65 lines the O2 pocket. A Phosphothreonine modification is found at Thr68. His94 serves as a coordination point for heme b.

The protein belongs to the globin family. In terms of assembly, monomeric.

It localises to the cytoplasm. The protein localises to the sarcoplasm. It carries out the reaction Fe(III)-heme b-[protein] + nitric oxide + H2O = Fe(II)-heme b-[protein] + nitrite + 2 H(+). The catalysed reaction is H2O2 + AH2 = A + 2 H2O. Monomeric heme protein which primary function is to store oxygen and facilitate its diffusion within muscle tissues. Reversibly binds oxygen through a pentacoordinated heme iron and enables its timely and efficient release as needed during periods of heightened demand. Depending on the oxidative conditions of tissues and cells, and in addition to its ability to bind oxygen, it also has a nitrite reductase activity whereby it regulates the production of bioactive nitric oxide. Under stress conditions, like hypoxia and anoxia, it also protects cells against reactive oxygen species thanks to its pseudoperoxidase activity. The chain is Myoglobin (MB) from Erinaceus europaeus (Western European hedgehog).